Consider the following 721-residue polypeptide: Glucans biosynthesis glucosyltransferase H (721 aa).

The next 6 helical transmembrane spans lie at 52–72, 97–117, 412–432, 459–479, 505–525, and 570–590; these read CSWRRVFVVGFALLISAFAIF, NFCWIALAFSSSIAGFFVLAS, SPFWLLLILSGLLLALQAHFI, FYITMGILFSPKIFGLLLLMF, ALVAPIMMLIHCGAVVSILFG, and LLAWMSPALIGLWFSVPLSGI.

Belongs to the glycosyltransferase 2 family. OpgH subfamily.

It localises to the cell inner membrane. It functions in the pathway glycan metabolism; osmoregulated periplasmic glucan (OPG) biosynthesis. Involved in the biosynthesis of osmoregulated periplasmic glucans (OPGs). This Vibrio cholerae serotype O1 (strain ATCC 39541 / Classical Ogawa 395 / O395) protein is Glucans biosynthesis glucosyltransferase H.